Reading from the N-terminus, the 113-residue chain is uncharacterized protein (113 aa).

Positions 1–19 are cleaved as a signal peptide; that stretch reads MLSPLSPRIIAAFTTAVGA.

It to M.tuberculosis Rv1291c.

This is an uncharacterized protein from Mycobacterium tuberculosis (strain CDC 1551 / Oshkosh).